Reading from the N-terminus, the 199-residue chain is Guanylate kinase (199 aa).

The Guanylate kinase-like domain occupies 20-198 (GKLIILTGPS…ALQAIEVALF (179 aa)). ATP is bound at residue 27 to 34 (GPSGVGKG).

The protein belongs to the guanylate kinase family.

Its subcellular location is the cytoplasm. The enzyme catalyses GMP + ATP = GDP + ADP. Functionally, essential for recycling GMP and indirectly, cGMP. This Nostoc sp. (strain PCC 7120 / SAG 25.82 / UTEX 2576) protein is Guanylate kinase.